A 377-amino-acid chain; its full sequence is Flagellin C (377 aa).

Coiled coils occupy residues 103–129 and 301–340; these read SNSK…IAET and VDSH…KDTD.

Belongs to the bacterial flagellin family. Heteromer of multiple flagellin subunits including FlaA, FlaB, FlaC, FlaD and possibly FlaE.

Its subcellular location is the secreted. The protein resides in the bacterial flagellum. In terms of biological role, flagellin is the subunit protein which polymerizes to form the filaments of bacterial flagella. FlaC is not essential for flagellar synthesis and motility. The sequence is that of Flagellin C (flaC) from Vibrio anguillarum (Listonella anguillarum).